The following is a 90-amino-acid chain: Mitochondrial import inner membrane translocase subunit Tim10 (90 aa).

Residues Cys29–Cys54 carry the Twin CX3C motif motif. Cystine bridges form between Cys29-Cys54 and Cys33-Cys50.

Belongs to the small Tim family. Heterohexamer; composed of 3 copies of TIMM9 and 3 copies of TIMM10/TIM10A, named soluble 70 kDa complex. The complex forms a 6-bladed alpha-propeller structure and associates with the TIMM22 component of the TIM22 complex. Interacts with multi-pass transmembrane proteins in transit. Also forms a complex composed of TIMM9, TIMM10/TIM10A and FXC1/TIM10B.

It is found in the mitochondrion inner membrane. Its function is as follows. Mitochondrial intermembrane chaperone that participates in the import and insertion of multi-pass transmembrane proteins into the mitochondrial inner membrane. May also be required for the transfer of beta-barrel precursors from the TOM complex to the sorting and assembly machinery (SAM complex) of the outer membrane. Acts as a chaperone-like protein that protects the hydrophobic precursors from aggregation and guide them through the mitochondrial intermembrane space. This chain is Mitochondrial import inner membrane translocase subunit Tim10 (TIMM10), found in Bos taurus (Bovine).